We begin with the raw amino-acid sequence, 517 residues long: Pentatricopeptide repeat-containing protein At1g77360, mitochondrial (517 aa).

A mitochondrion-targeting transit peptide spans 1 to 59 (MKRFRIRSVDFRQLVNFFSFMRWECSSSATVWVRFNMTIRIINRQSRFCCKSFLSARLY). PPR repeat units follow at residues 133-163 (SVRA…MRKK), 167-201 (NVET…DLPP), 202-232 (NLVA…MRDR), 236-270 (DSKT…GCHP), 271-305 (DIVT…ICKP), 306-340 (TTFI…GMKA), 341-375 (DVAV…GVTP), 376-406 (NSKS…MIKV), 410-444 (DADT…GVFP), and 445-479 (SMHT…GIRP).

Belongs to the PPR family. P subfamily.

Its subcellular location is the mitochondrion. The sequence is that of Pentatricopeptide repeat-containing protein At1g77360, mitochondrial from Arabidopsis thaliana (Mouse-ear cress).